A 189-amino-acid polypeptide reads, in one-letter code: MIVALKGNIEKKEPTRLWLEVGGVTYEIFISIHTSAALGEKEARLLITHLIREEAWSLYGFAEEAEKRVFDTLIKINGVGPKAALAILSTYTPPTFAQIIQAQDVKALQRVPGIGPKSAGRIMVELAGFSLSLQEGSKASTPPVFEESRLALESLGFKSELIAKALQNIQATTTQEIIKEALKKLQTLR.

The interval M1–A62 is domain I. Positions E63 to K138 are domain II. A flexible linker region spans residues K138 to A139. Residues S140–R189 are domain III.

Belongs to the RuvA family. Homotetramer. Forms an RuvA(8)-RuvB(12)-Holliday junction (HJ) complex. HJ DNA is sandwiched between 2 RuvA tetramers; dsDNA enters through RuvA and exits via RuvB. An RuvB hexamer assembles on each DNA strand where it exits the tetramer. Each RuvB hexamer is contacted by two RuvA subunits (via domain III) on 2 adjacent RuvB subunits; this complex drives branch migration. In the full resolvosome a probable DNA-RuvA(4)-RuvB(12)-RuvC(2) complex forms which resolves the HJ.

The protein resides in the cytoplasm. In terms of biological role, the RuvA-RuvB-RuvC complex processes Holliday junction (HJ) DNA during genetic recombination and DNA repair, while the RuvA-RuvB complex plays an important role in the rescue of blocked DNA replication forks via replication fork reversal (RFR). RuvA specifically binds to HJ cruciform DNA, conferring on it an open structure. The RuvB hexamer acts as an ATP-dependent pump, pulling dsDNA into and through the RuvAB complex. HJ branch migration allows RuvC to scan DNA until it finds its consensus sequence, where it cleaves and resolves the cruciform DNA. This chain is Holliday junction branch migration complex subunit RuvA, found in Wolinella succinogenes (strain ATCC 29543 / DSM 1740 / CCUG 13145 / JCM 31913 / LMG 7466 / NCTC 11488 / FDC 602W) (Vibrio succinogenes).